The sequence spans 233 residues: Zinc import ATP-binding protein ZnuC (233 aa).

Residues 6–222 form the ABC transporter domain; the sequence is IEFHNVSKKF…SDFSNALSSL (217 aa). Residue 38 to 45 participates in ATP binding; that stretch reads GPNGAGKT.

This sequence belongs to the ABC transporter superfamily. Zinc importer (TC 3.A.1.15.5) family. In terms of assembly, the complex is composed of two ATP-binding proteins (ZnuC), two transmembrane proteins (ZnuB) and a solute-binding protein (ZnuA).

The protein localises to the cell inner membrane. The enzyme catalyses Zn(2+)(out) + ATP(in) + H2O(in) = Zn(2+)(in) + ADP(in) + phosphate(in) + H(+)(in). Functionally, part of the ABC transporter complex ZnuABC involved in zinc import. Responsible for energy coupling to the transport system. This Rickettsia bellii (strain RML369-C) protein is Zinc import ATP-binding protein ZnuC.